The following is a 227-amino-acid chain: RNA pyrophosphohydrolase (227 aa).

One can recognise a Nudix hydrolase domain in the interval 6-149; that stretch reads GFRPNVGIIL…KRDVYQMALT (144 aa). The Nudix box motif lies at 38-59; the sequence is GGIKYGETPEQAMYRELHEEIG. A disordered region spans residues 165–227; it reads PYGTHGAHGA…PVSTTRSTDD (63 aa). The segment covering 192–201 has biased composition (low complexity); it reads AQAAQQADAD. A compositionally biased stretch (polar residues) spans 217–227; that stretch reads TPVSTTRSTDD.

This sequence belongs to the Nudix hydrolase family. RppH subfamily. It depends on a divalent metal cation as a cofactor.

Its function is as follows. Accelerates the degradation of transcripts by removing pyrophosphate from the 5'-end of triphosphorylated RNA, leading to a more labile monophosphorylated state that can stimulate subsequent ribonuclease cleavage. This chain is RNA pyrophosphohydrolase, found in Cupriavidus taiwanensis (strain DSM 17343 / BCRC 17206 / CCUG 44338 / CIP 107171 / LMG 19424 / R1) (Ralstonia taiwanensis (strain LMG 19424)).